Consider the following 138-residue polypeptide: Cysteine desulfuration protein SufE (138 aa).

C51 serves as the catalytic Cysteine persulfide intermediate.

This sequence belongs to the SufE family. As to quaternary structure, homodimer. Interacts with SufS.

It localises to the cytoplasm. Its pathway is cofactor biosynthesis; iron-sulfur cluster biosynthesis. Its function is as follows. Participates in cysteine desulfuration mediated by SufS. Cysteine desulfuration mobilizes sulfur from L-cysteine to yield L-alanine and constitutes an essential step in sulfur metabolism for biosynthesis of a variety of sulfur-containing biomolecules. Functions as a sulfur acceptor for SufS, by mediating the direct transfer of the sulfur atom from the S-sulfanylcysteine of SufS, an intermediate product of cysteine desulfuration process. The polypeptide is Cysteine desulfuration protein SufE (Escherichia coli O45:K1 (strain S88 / ExPEC)).